The following is an 87-amino-acid chain: Small ribosomal subunit protein uS15 (87 aa).

This sequence belongs to the universal ribosomal protein uS15 family. As to quaternary structure, part of the 30S ribosomal subunit. Forms a bridge to the 50S subunit in the 70S ribosome, contacting the 23S rRNA.

One of the primary rRNA binding proteins, it binds directly to 16S rRNA where it helps nucleate assembly of the platform of the 30S subunit by binding and bridging several RNA helices of the 16S rRNA. Its function is as follows. Forms an intersubunit bridge (bridge B4) with the 23S rRNA of the 50S subunit in the ribosome. The polypeptide is Small ribosomal subunit protein uS15 (Clostridium perfringens (strain ATCC 13124 / DSM 756 / JCM 1290 / NCIMB 6125 / NCTC 8237 / Type A)).